A 123-amino-acid polypeptide reads, in one-letter code: Large ribosomal subunit protein bL20 (123 aa).

This sequence belongs to the bacterial ribosomal protein bL20 family.

Its function is as follows. Binds directly to 23S ribosomal RNA and is necessary for the in vitro assembly process of the 50S ribosomal subunit. It is not involved in the protein synthesizing functions of that subunit. The sequence is that of Large ribosomal subunit protein bL20 from Pseudothermotoga lettingae (strain ATCC BAA-301 / DSM 14385 / NBRC 107922 / TMO) (Thermotoga lettingae).